A 500-amino-acid polypeptide reads, in one-letter code: L-arabinose isomerase (500 aa).

Positions 306, 333, 350, and 450 each coordinate Mn(2+).

It belongs to the arabinose isomerase family. As to quaternary structure, homohexamer. Mn(2+) is required as a cofactor.

The enzyme catalyses beta-L-arabinopyranose = L-ribulose. It functions in the pathway carbohydrate degradation; L-arabinose degradation via L-ribulose; D-xylulose 5-phosphate from L-arabinose (bacterial route): step 1/3. Catalyzes the conversion of L-arabinose to L-ribulose. The sequence is that of L-arabinose isomerase from Klebsiella pneumoniae subsp. pneumoniae (strain ATCC 700721 / MGH 78578).